The sequence spans 309 residues: Dihydroorotate dehydrogenase B (NAD(+)), catalytic subunit (309 aa).

FMN is bound by residues Ser21 and 45–46 (KA). Residues Lys45 and 69–73 (NAIGL) contribute to the substrate site. Positions 99 and 127 each coordinate FMN. Asn127 provides a ligand contact to substrate. Cys130 (nucleophile) is an active-site residue. FMN contacts are provided by Lys165 and Ile191. 192 to 193 (NT) is a binding site for substrate. FMN-binding positions include Gly217, 243 to 244 (GG), and 265 to 266 (GT).

Belongs to the dihydroorotate dehydrogenase family. Type 1 subfamily. In terms of assembly, heterotetramer of 2 PyrK and 2 PyrD type B subunits. The cofactor is FMN.

It localises to the cytoplasm. It catalyses the reaction (S)-dihydroorotate + NAD(+) = orotate + NADH + H(+). It functions in the pathway pyrimidine metabolism; UMP biosynthesis via de novo pathway; orotate from (S)-dihydroorotate (NAD(+) route): step 1/1. Its function is as follows. Catalyzes the conversion of dihydroorotate to orotate with NAD(+) as electron acceptor. The polypeptide is Dihydroorotate dehydrogenase B (NAD(+)), catalytic subunit (pyrD) (Bacillus cereus (strain B4264)).